Consider the following 669-residue polypeptide: MAIVQTLPVPLEPAPEAATAPQAPVMGSVSSLISGRPCPGGPAPPRHHGPPGPTFFRQQDGLLRGGYEAQEPLCPAVPPRKAVPVTSFTYINEDFRTESPPSPSSDVEDAREQRAHNAHLRGPPPKLIPVSGKLEKNMEKILIRPTAFKPVLPKPRGAPSLPSFMGPRATGLSGSQGSLTQLFGGPASSSSSSSSSSAADKPLAFSGWASGCPSGTLSDSGRNSLSSLPTYSTGGAEPTTSSPGGHLPSHGSGRGALPGPARGVPTGPSHSDSGRSSSSKSTGSLGGRVAGGLLGSGTRASPDSSSCGERSPPPPPPPPSDEALLHCVLEGKLRDREAELQQLRDSLDENEATMCQAYEERQRHWQREREALREDCAAQAQRAQRAQQLLQLQVFQLQQEKRQLQDDFAQLLQEREQLERRCATLEREQRELGPRLEETKWEVCQKSGEISLLKQQLKESQAELVQKGSELVALRVALREARATLRVSEGRARGLQEAARARELELEACSQELQRHRQEAEQLREKAGQLDAEAAGLREPPVPPATADPFLLAESDEAKVQRAAAGVGGSLRAQVERLRVELQRERRRGEEQRDSFEGERLAWQAEKEQVIRYQKQLQHNYIQMYRRNRQLEQELQQLSLELEARELADLGLAEQAPCICLEEITATEI.

The segment covering 1 to 25 has biased composition (low complexity); sequence MAIVQTLPVPLEPAPEAATAPQAPV. Disordered regions lie at residues 1–56, 92–131, 150–201, and 215–323; these read MAIV…PTFF, NEDF…IPVS, PVLP…AADK, and GTLS…SDEA. The required for centrosomal localization stretch occupies residues 1 to 332; it reads MAIVQTLPVP…ALLHCVLEGK (332 aa). Over residues 172 to 181 the composition is skewed to polar residues; sequence LSGSQGSLTQ. Low complexity predominate over residues 187–199; sequence ASSSSSSSSSSAA. The span at 215–233 shows a compositional bias: polar residues; sequence GTLSDSGRNSLSSLPTYST. Low complexity-rich tracts occupy residues 241–251 and 267–283; these read SSPGGHLPSHG and GPSH…KSTG. A Phosphoserine modification is found at Ser-249. A compositionally biased stretch (gly residues) spans 284-295; it reads SLGGRVAGGLLG. At Ser-296 the chain carries Phosphoserine. Over residues 298–308 the composition is skewed to polar residues; that stretch reads TRASPDSSSCG. Residues 311–320 are compositionally biased toward pro residues; it reads SPPPPPPPPS. Residues 328-649 adopt a coiled-coil conformation; the sequence is VLEGKLRDRE…LELEARELAD (322 aa). A sufficient for interaction with CTNNB1 region spans residues 447–669; sequence SGEISLLKQQ…CLEEITATEI (223 aa). A sufficient for interaction with KATNB1 and for inhibition of katanin-mediated microtubule severing region spans residues 450 to 669; the sequence is ISLLKQQLKE…CLEEITATEI (220 aa). Residue Ser-570 is modified to Phosphoserine. A Nuclear export signal motif is present at residues 631 to 640; sequence LEQELQQLSL.

Belongs to the LZTS2 family. In terms of assembly, interacts with KATNB1. Also interacts with CTNNB1, gamma-tubulin and KIF23. Highly expressed in prostate and testis, and at slightly lower levels in spleen, thymus, uterus, small intestine and colon.

The protein localises to the cytoplasm. Its subcellular location is the cytoskeleton. It is found in the microtubule organizing center. It localises to the centrosome. In terms of biological role, negative regulator of katanin-mediated microtubule severing and release from the centrosome. Required for central spindle formation and the completion of cytokinesis. May negatively regulate axonal outgrowth by preventing the formation of microtubule bundles that are necessary for transport within the elongating axon. Negative regulator of the Wnt signaling pathway. Represses beta-catenin-mediated transcriptional activation by promoting the nuclear exclusion of beta-catenin. The protein is Leucine zipper putative tumor suppressor 2 of Homo sapiens (Human).